The chain runs to 426 residues: Enolase (426 aa).

(2R)-2-phosphoglycerate is bound at residue Gln163. Glu205 acts as the Proton donor in catalysis. 3 residues coordinate Mg(2+): Asp242, Glu286, and Asp313. 4 residues coordinate (2R)-2-phosphoglycerate: Lys338, Arg367, Ser368, and Lys389. Lys338 (proton acceptor) is an active-site residue.

Belongs to the enolase family. The cofactor is Mg(2+).

The protein resides in the cytoplasm. It is found in the secreted. Its subcellular location is the cell surface. The catalysed reaction is (2R)-2-phosphoglycerate = phosphoenolpyruvate + H2O. It functions in the pathway carbohydrate degradation; glycolysis; pyruvate from D-glyceraldehyde 3-phosphate: step 4/5. Its function is as follows. Catalyzes the reversible conversion of 2-phosphoglycerate (2-PG) into phosphoenolpyruvate (PEP). It is essential for the degradation of carbohydrates via glycolysis. The sequence is that of Enolase from Helicobacter pylori (strain G27).